A 213-amino-acid chain; its full sequence is Ribosomal RNA small subunit methyltransferase G (213 aa).

S-adenosyl-L-methionine is bound by residues G75, F80, 128-129, and R144; that span reads IE.

Belongs to the methyltransferase superfamily. RNA methyltransferase RsmG family.

Its subcellular location is the cytoplasm. The enzyme catalyses guanosine(527) in 16S rRNA + S-adenosyl-L-methionine = N(7)-methylguanosine(527) in 16S rRNA + S-adenosyl-L-homocysteine. Functionally, specifically methylates the N7 position of guanine in position 527 of 16S rRNA. The chain is Ribosomal RNA small subunit methyltransferase G from Brucella suis biovar 1 (strain 1330).